Consider the following 869-residue polypeptide: Speckle targeted PIP5K1A-regulated poly(A) polymerase (869 aa).

The segment at 16–46 adopts a Matrin-type zinc-finger fold; that stretch reads FRCCLCHVTTANRPSLDAHLGGRKHRHLVEL. In terms of domain architecture, RRM spans 56-128; sequence RSVFVSGFPR…HRLRVRPREQ (73 aa). Residues 111–147 are disordered; it reads QPQHTLGGHRLRVRPREQKEFQSPASKSPKGAAPDSH. An ATP-binding site is contributed by Ser205. Mg(2+) contacts are provided by Asp216 and Asp218. Residues Asp216 and Asp218 each coordinate UTP. Residues 252–315 are disordered; that stretch reads QALACTPASP…PASPLQEDRG (64 aa). The segment covering 259 to 269 has biased composition (pro residues); the sequence is ASPPDSQPPSP. The span at 279–290 shows a compositional bias: polar residues; that stretch reads TPSSSLAPQTPD. Asn391 provides a ligand contact to ATP. Asn391, Arg413, Tyr431, and His548 together coordinate UTP. The PAP-associated domain maps to 490 to 548; that stretch reads LSSLLAQFFSCVSCWDLRGSLLSLREGQALPVAGDLPSNRWEGLRLGPMNLQDPFDLSH. Residues 597–869 are KA1; binds the bulging loops of U6 snRNA but is dispensable for terminal uridylyltransferase activity; it reads SSPSSLLSAT…VFLPQALRNL (273 aa). Basic and acidic residues-rich tracts occupy residues 637-648 and 660-686; these read GTKRLRSDRGGP and LKLD…HSED. Disordered regions lie at residues 637–686 and 720–755; these read GTKR…HSED and LATG…TGRG. Residues Ser684 and Ser748 each carry the phosphoserine modification.

The protein belongs to the DNA polymerase type-B-like family. Associates with the cleavage and polyadenylation specificity factor (CPSF) complex. Interacts with CPSF1 and CPSF3; the interaction is direct. Interacts with PIP5K1A. The cofactor is Mg(2+). Requires Mn(2+) as cofactor. Phosphorylated by CK1 in the proline-rich (Pro-rich) region.

It is found in the nucleus. The protein localises to the nucleolus. Its subcellular location is the nucleus speckle. It carries out the reaction RNA(n) + UTP = RNA(n)-3'-uridine ribonucleotide + diphosphate. The catalysed reaction is RNA(n) + ATP = RNA(n)-3'-adenine ribonucleotide + diphosphate. With respect to regulation, adenylyltransferase activity is specifically phosphatidylinositol 4,5-bisphosphate (PtdIns(4,5)P2). Poly(A) polymerase that creates the 3'-poly(A) tail of specific pre-mRNAs. Localizes to nuclear speckles together with PIP5K1A and mediates polyadenylation of a select set of mRNAs, such as HMOX1. In addition to polyadenylation, it is also required for the 3'-end cleavage of pre-mRNAs: binds to the 3'UTR of targeted pre-mRNAs and promotes the recruitment and assembly of the CPSF complex on the 3'UTR of pre-mRNAs. In addition to adenylyltransferase activity, also has uridylyltransferase activity. However, the ATP ratio is higher than UTP in cells, suggesting that it functions primarily as a poly(A) polymerase. Acts as a specific terminal uridylyltransferase for U6 snRNA in vitro: responsible for a controlled elongation reaction that results in the restoration of the four 3'-terminal UMP-residues found in newly transcribed U6 snRNA. Not involved in replication-dependent histone mRNA degradation. The protein is Speckle targeted PIP5K1A-regulated poly(A) polymerase (TUT1) of Ailuropoda melanoleuca (Giant panda).